A 660-amino-acid chain; its full sequence is tRNA 5-methylaminomethyl-2-thiouridine biosynthesis bifunctional protein MnmC (660 aa).

The segment at 1 to 242 (MTDRIVPATL…KRAMLVGEFA (242 aa)) is tRNA (mnm(5)s(2)U34)-methyltransferase. The FAD-dependent cmnm(5)s(2)U34 oxidoreductase stretch occupies residues 266 to 660 (IGAGLAGCAV…VRALRHGRVA (395 aa)).

This sequence in the N-terminal section; belongs to the methyltransferase superfamily. tRNA (mnm(5)s(2)U34)-methyltransferase family. The protein in the C-terminal section; belongs to the DAO family. FAD serves as cofactor.

The protein localises to the cytoplasm. The catalysed reaction is 5-aminomethyl-2-thiouridine(34) in tRNA + S-adenosyl-L-methionine = 5-methylaminomethyl-2-thiouridine(34) in tRNA + S-adenosyl-L-homocysteine + H(+). Its function is as follows. Catalyzes the last two steps in the biosynthesis of 5-methylaminomethyl-2-thiouridine (mnm(5)s(2)U) at the wobble position (U34) in tRNA. Catalyzes the FAD-dependent demodification of cmnm(5)s(2)U34 to nm(5)s(2)U34, followed by the transfer of a methyl group from S-adenosyl-L-methionine to nm(5)s(2)U34, to form mnm(5)s(2)U34. This Burkholderia mallei (strain NCTC 10247) protein is tRNA 5-methylaminomethyl-2-thiouridine biosynthesis bifunctional protein MnmC.